The following is a 351-amino-acid chain: Protein Wnt-8b (351 aa).

Positions 1-22 (MFLSKPSVYICLFTCVLQLSHS) are cleaved as a signal peptide. Cysteine 54 and cysteine 65 are disulfide-bonded. N-linked (GlcNAc...) asparagine glycosylation occurs at asparagine 103. 10 cysteine pairs are disulfide-bonded: cysteine 104-cysteine 112, cysteine 114-cysteine 132, cysteine 180-cysteine 194, cysteine 182-cysteine 189, cysteine 256-cysteine 294, cysteine 272-cysteine 287, cysteine 291-cysteine 333, cysteine 309-cysteine 324, cysteine 311-cysteine 321, and cysteine 316-cysteine 317. Serine 186 is lipidated: O-palmitoleoyl serine. The N-linked (GlcNAc...) asparagine glycan is linked to asparagine 259.

Belongs to the Wnt family. Palmitoleoylation is required for efficient binding to frizzled receptors. Depalmitoleoylation leads to Wnt signaling pathway inhibition. Post-translationally, proteolytic processing by TIKI1 and TIKI2 promotes oxidation and formation of large disulfide-bond oligomers, leading to inactivation of WNT8B. In terms of tissue distribution, expression is restricted to the brain, and more specifically to the forebrain.

It is found in the secreted. The protein localises to the extracellular space. It localises to the extracellular matrix. In terms of biological role, ligand for members of the frizzled family of seven transmembrane receptors. May play an important role in the development and differentiation of certain forebrain structures, notably the hippocampus. The protein is Protein Wnt-8b (WNT8B) of Homo sapiens (Human).